Consider the following 362-residue polypeptide: Peptide chain release factor 1 (362 aa).

Gln-237 is subject to N5-methylglutamine.

It belongs to the prokaryotic/mitochondrial release factor family. Methylated by PrmC. Methylation increases the termination efficiency of RF1.

It is found in the cytoplasm. Its function is as follows. Peptide chain release factor 1 directs the termination of translation in response to the peptide chain termination codons UAG and UAA. The chain is Peptide chain release factor 1 from Aliivibrio salmonicida (strain LFI1238) (Vibrio salmonicida (strain LFI1238)).